Here is a 308-residue protein sequence, read N- to C-terminus: uncharacterized protein (308 aa).

Residues 19–43 form a disordered region; the sequence is EPQASGAGPAQTPPPVTVPMTPPSK. A compositionally biased stretch (pro residues) spans 29 to 43; it reads QTPPPVTVPMTPPSK.

This is an uncharacterized protein from Deinococcus radiodurans (strain ATCC 13939 / DSM 20539 / JCM 16871 / CCUG 27074 / LMG 4051 / NBRC 15346 / NCIMB 9279 / VKM B-1422 / R1).